The primary structure comprises 345 residues: Phosphate acyltransferase (345 aa).

The protein belongs to the PlsX family. As to quaternary structure, homodimer. Probably interacts with PlsY.

Its subcellular location is the cytoplasm. It catalyses the reaction a fatty acyl-[ACP] + phosphate = an acyl phosphate + holo-[ACP]. It participates in lipid metabolism; phospholipid metabolism. Its function is as follows. Catalyzes the reversible formation of acyl-phosphate (acyl-PO(4)) from acyl-[acyl-carrier-protein] (acyl-ACP). This enzyme utilizes acyl-ACP as fatty acyl donor, but not acyl-CoA. The protein is Phosphate acyltransferase of Photorhabdus laumondii subsp. laumondii (strain DSM 15139 / CIP 105565 / TT01) (Photorhabdus luminescens subsp. laumondii).